The sequence spans 483 residues: MAQADIALIGLAVMGQNLILNMNDHGFVVCAFNRTVSKVDDFLANEAKGTKVVGAQSLKDMVSKLKKPRRVILLVKAGQAVDDFIEKLVPLLDTGDIIIDGGNSEYRDTTRRCRDLKAKGILFVGSGVSGGEEGARYGPSLMPGGNKEAWPHIKAIFQAIAAKVGTGEPCCDWVGDEGAGHFVKMVHNGIEYGDMQLICEAYHLMKDVLGMRHEEMAQAFEEWNKTELDSFLIEITANILKYRDTDGKELLPKIRDSAGQKGTGKWTAISALEYGMPVTLIGEAVFARCLSSLKEERVQASQKLKGPKVVQLEGSKKSFLEDIRKALYASKIISYAQGFMLLRQAATEFGWTLNYGGIALMWRGGCIIRSVFLGKIKDAFERNPELQNLLLDDFFKSAVDNCQDSWRRVISTGVQAGIPMPCFTTALSFYDGYRHEMLPANLIQAQRDYFGAHTYELLTKPGEFIHTNWTGHGGSVSSSSYNA.

Residues 10–15 (GLAVMG) and 33–35 (NRT) each bind NADP(+). Lysine 38 is modified (N6-acetyllysine). Serine 57 is modified (phosphoserine). Lysine 59 carries the post-translational modification N6-acetyllysine. Residues 75–77 (VKA) and asparagine 103 contribute to the NADP(+) site. Substrate contacts are provided by residues asparagine 103 and 129 to 131 (SGG). Serine 129 carries the phosphoserine modification. The active-site Proton acceptor is lysine 184. 187–188 (HN) serves as a coordination point for substrate. The active-site Proton donor is glutamate 191. Substrate-binding residues include tyrosine 192, lysine 261, arginine 288, arginine 447, and histidine 453. Residue 478–481 (SSSY) coordinates NADP(+).

The protein belongs to the 6-phosphogluconate dehydrogenase family. As to quaternary structure, homodimer.

It is found in the cytoplasm. It carries out the reaction 6-phospho-D-gluconate + NADP(+) = D-ribulose 5-phosphate + CO2 + NADPH. It participates in carbohydrate degradation; pentose phosphate pathway; D-ribulose 5-phosphate from D-glucose 6-phosphate (oxidative stage): step 3/3. In terms of biological role, catalyzes the oxidative decarboxylation of 6-phosphogluconate to ribulose 5-phosphate and CO(2), with concomitant reduction of NADP to NADPH. The protein is 6-phosphogluconate dehydrogenase, decarboxylating (Pgd) of Mus musculus (Mouse).